Reading from the N-terminus, the 123-residue chain is Large ribosomal subunit protein eL8 (123 aa).

The protein belongs to the eukaryotic ribosomal protein eL8 family. As to quaternary structure, part of the 50S ribosomal subunit. Probably part of the RNase P complex.

It localises to the cytoplasm. In terms of biological role, multifunctional RNA-binding protein that recognizes the K-turn motif in ribosomal RNA, the RNA component of RNase P, box H/ACA, box C/D and box C'/D' sRNAs. This chain is Large ribosomal subunit protein eL8, found in Methanobrevibacter smithii (strain ATCC 35061 / DSM 861 / OCM 144 / PS).